The primary structure comprises 361 residues: Single-stranded DNA-binding protein 2 (361 aa).

Lys6 is modified (N6-acetyllysine). Positions Ala18–Lys50 constitute a LisH domain. 2 disordered regions span residues Gly147–Met171 and Gly194–Val361. Gly residues predominate over residues Gly204–Arg219. Residues Thr225–Ser236 show a composition bias toward polar residues. Residues Gly246–Pro256 are compositionally biased toward pro residues. Positions Gly289 to Gly299 are enriched in gly residues. Residues Ile317–Gly332 show a composition bias toward polar residues. A Phosphoserine modification is found at Ser321. Thr333 is modified (phosphothreonine). A compositionally biased stretch (polar residues) spans Asn346–Val361.

In terms of tissue distribution, ubiquitous.

It localises to the nucleus. The sequence is that of Single-stranded DNA-binding protein 2 (SSBP2) from Homo sapiens (Human).